Here is a 92-residue protein sequence, read N- to C-terminus: Large ribosomal subunit protein bL25 (92 aa).

This sequence belongs to the bacterial ribosomal protein bL25 family. In terms of assembly, part of the 50S ribosomal subunit; part of the 5S rRNA/L5/L18/L25 subcomplex. Contacts the 5S rRNA. Binds to the 5S rRNA independently of L5 and L18.

This is one of the proteins that binds to the 5S RNA in the ribosome where it forms part of the central protuberance. The polypeptide is Large ribosomal subunit protein bL25 (Vibrio vulnificus (strain CMCP6)).